We begin with the raw amino-acid sequence, 131 residues long: ER membrane protein complex subunit 5 (131 aa).

At 1 to 3 the chain is on the cytoplasmic side; that stretch reads MAP. A helical transmembrane segment spans residues 4-22; the sequence is SLWKGLVGVGLFALAHAAF. The Lumenal segment spans residues 23–43; sequence SAAQHRSYMRLTEKEDESLPI. Residues 44 to 63 form a helical membrane-spanning segment; sequence DIVLQTLLAFAVTCYGIVHI. Topologically, residues 64 to 131 are cytoplasmic; it reads AGEFKDMDAT…KLRKFDSLRR (68 aa). At Ser120 the chain carries Phosphoserine.

It belongs to the membrane magnesium transporter (TC 1.A.67) family. As to quaternary structure, component of the ER membrane protein complex (EMC). In terms of tissue distribution, abundant in heart muscle and kidney with lower levels in liver and brain and very little expression in intestine or colon. In kidney, highest levels in distal convoluted tubule.

The protein resides in the endoplasmic reticulum membrane. It localises to the golgi apparatus membrane. Its subcellular location is the early endosome membrane. Part of the endoplasmic reticulum membrane protein complex (EMC) that enables the energy-independent insertion into endoplasmic reticulum membranes of newly synthesized membrane proteins. Preferentially accommodates proteins with transmembrane domains that are weakly hydrophobic or contain destabilizing features such as charged and aromatic residues. Involved in the cotranslational insertion of multi-pass membrane proteins in which stop-transfer membrane-anchor sequences become ER membrane spanning helices. It is also required for the post-translational insertion of tail-anchored/TA proteins in endoplasmic reticulum membranes. By mediating the proper cotranslational insertion of N-terminal transmembrane domains in an N-exo topology, with translocated N-terminus in the lumen of the ER, controls the topology of multi-pass membrane proteins like the G protein-coupled receptors. By regulating the insertion of various proteins in membranes, it is indirectly involved in many cellular processes. May be involved Mg(2+) transport. The polypeptide is ER membrane protein complex subunit 5 (Mus musculus (Mouse)).